Here is a 537-residue protein sequence, read N- to C-terminus: Tyrosine-protein phosphatase CDC14 homolog (537 aa).

A Tyrosine-protein phosphatase domain is found at 182–345 (DFNWISPKFI…QVHFRAYFYE (164 aa)). C286 (phosphocysteine intermediate) is an active-site residue. Residues 359-537 (EPLATPPRHP…PKPSKSRLIS (179 aa)) form a disordered region. A compositionally biased stretch (polar residues) spans 370 to 382 (NATNGTSQSNIST). Positions 400–411 (PPSARRLPSASS) are enriched in low complexity. Over residues 421 to 437 (ASKQSIQNENKASYSSY) the composition is skewed to polar residues. Position 453 is a phosphothreonine (T453). S468 and S470 each carry phosphoserine. Over residues 490 to 502 (RRTSGNRWSSGSS) the composition is skewed to low complexity. S513 is modified (phosphoserine). Polar residues predominate over residues 514–523 (MSSLNNTSNG). Residues 526–537 (AKPKPSKSRLIS) are compositionally biased toward basic residues.

This sequence belongs to the protein-tyrosine phosphatase family. Non-receptor class CDC14 subfamily. As to quaternary structure, interacts with ark1 at the kinetochores. Interacts with bir1, cdc25, mid1, nbl1, pic1, and rad24. In terms of processing, phosphorylated by cds1, chk1, pmk1, and cdc2 upon Hydroxylurea and H(2)O(2) stress treatment. Phosphorylation regulates the nucleolar-to-nucleoplasmic transition. Is able to autodephosphorylate.

Its subcellular location is the nucleus. It localises to the nucleolus. The protein resides in the cytoplasm. The protein localises to the cytoskeleton. It is found in the microtubule organizing center. Its subcellular location is the spindle pole body. It carries out the reaction O-phospho-L-tyrosyl-[protein] + H2O = L-tyrosyl-[protein] + phosphate. Functionally, protein phosphatase which antagonizes mitotic cyclin-dependent kinase cdc2, the inactivation of which is essential for exit from mitosis. To access its substrates, is released from nucleolar sequestration during mitosis. Plays an essential in coordinating the nuclear division cycle with cytokinesis through the cytokinesis checkpoint. Involved in chromosome segregation, where it is required for meiosis I spindle dissambly as well as for establishing two consecutive chromosome segregation phases. Allows damaged actomyosin rings to be maintained to facilitate completion of cell division in response to minor perturbation of the cell division machinery. Dephosphorylates the mitotic inducer cdc25 for its rapid degradation. Down-regulation of cdc25 activity ensures a prompt inactivation of mitotic cdc2 complexes to trigger cell division. Also dephosphorylates cdc2-phosphorylated nsk1, allowing nsk1-binding to kinetochores and spindle. Dephosphorylates ase1, which is essential for spindle midzone assembly and for continuous extension of the anaphase spindle. Tethered to the contractile ring by mid1, where it dephosphorylates cdc15. The sequence is that of Tyrosine-protein phosphatase CDC14 homolog (clp1) from Schizosaccharomyces pombe (strain 972 / ATCC 24843) (Fission yeast).